A 391-amino-acid chain; its full sequence is ATP phosphoribosyltransferase regulatory subunit (391 aa).

The protein belongs to the class-II aminoacyl-tRNA synthetase family. HisZ subfamily. In terms of assembly, heteromultimer composed of HisG and HisZ subunits.

It is found in the cytoplasm. Its pathway is amino-acid biosynthesis; L-histidine biosynthesis; L-histidine from 5-phospho-alpha-D-ribose 1-diphosphate: step 1/9. Required for the first step of histidine biosynthesis. May allow the feedback regulation of ATP phosphoribosyltransferase activity by histidine. The chain is ATP phosphoribosyltransferase regulatory subunit from Bacillus licheniformis (strain ATCC 14580 / DSM 13 / JCM 2505 / CCUG 7422 / NBRC 12200 / NCIMB 9375 / NCTC 10341 / NRRL NRS-1264 / Gibson 46).